The following is a 372-amino-acid chain: Alanine racemase (372 aa).

Lysine 35 (proton acceptor; specific for D-alanine) is an active-site residue. An N6-(pyridoxal phosphate)lysine modification is found at lysine 35. Residue arginine 143 coordinates substrate. The Proton acceptor; specific for L-alanine role is filled by tyrosine 268. Methionine 316 serves as a coordination point for substrate.

Belongs to the alanine racemase family. It depends on pyridoxal 5'-phosphate as a cofactor.

The enzyme catalyses L-alanine = D-alanine. The protein operates within amino-acid biosynthesis; D-alanine biosynthesis; D-alanine from L-alanine: step 1/1. Its function is as follows. Catalyzes the interconversion of L-alanine and D-alanine. May also act on other amino acids. This is Alanine racemase (alr) from Shewanella frigidimarina (strain NCIMB 400).